The sequence spans 525 residues: Keratin, type I cytoskeletal 24 (525 aa).

Residues 1–30 (MSCSSRASSSRAGGSSSARVSAGGSSFSSG) form a disordered region. The head stretch occupies residues 1 to 139 (MSCSSRASSS…VGDGGLFSGG (139 aa)). The tract at residues 140–175 (EKQTMQNLNDRLANYLDKVRALEEANTDLENKIKEW) is coil 1A. In terms of domain architecture, IF rod spans 140-456 (EKQTMQNLND…RLLDGEGGGS (317 aa)). The tract at residues 176-198 (YDKYGPGSGDGGSGRDYSKYYSI) is linker 1. Residues 199 to 290 (IEDLRNQIIA…KNHEEEMKNM (92 aa)) are coil 1B. A linker 12 region spans residues 291 to 313 (QGSSGGEVTVEMNAAPGTDLTKL). The segment at 314–452 (LNDMRAQYEE…ETYRRLLDGE (139 aa)) is coil 2. Positions 453 to 525 (GGGSSFAEFG…VSSISEVKVK (73 aa)) are tail. The tract at residues 459-497 (AEFGGRNSGSVNMGSRDLVSGDSRSGSCSGQGRDSSKTR) is disordered. Residues 480 to 491 (DSRSGSCSGQGR) show a composition bias toward polar residues.

Belongs to the intermediate filament family. In terms of assembly, heterotetramer of two type I and two type II keratins. In terms of tissue distribution, highly expressed in keratinocytes, placenta, colon and spleen. Expressed at lower level in thymus and testis.

The sequence is that of Keratin, type I cytoskeletal 24 (KRT24) from Homo sapiens (Human).